Reading from the N-terminus, the 529-residue chain is Probable cytochrome P450 6t1 (529 aa).

C472 provides a ligand contact to heme.

The protein belongs to the cytochrome P450 family. The cofactor is heme.

The protein localises to the endoplasmic reticulum membrane. Its subcellular location is the microsome membrane. May be involved in the metabolism of insect hormones and in the breakdown of synthetic insecticides. The polypeptide is Probable cytochrome P450 6t1 (Cyp6t1) (Drosophila melanogaster (Fruit fly)).